The chain runs to 95 residues: Putative small ubiquitin-related modifier 7 (95 aa).

Residues 13–90 (SHITIKIKSQ…IDAFVDQIAG (78 aa)) form the Ubiquitin-like domain. G90 participates in a covalent cross-link: Glycyl lysine isopeptide (Gly-Lys) (interchain with K-? in acceptor proteins).

Belongs to the ubiquitin family. SUMO subfamily. Interacts with SAE2, SCE1, SIZ1 and MMS21 Covalently attached to a number of proteins.

The protein localises to the nucleus. It localises to the cytoplasm. Functionally, ubiquitin-like protein which can be covalently attached to target lysines as a monomer. Does not seem to be involved in protein degradation and may function as an antagonist of ubiquitin in the degradation process. The protein is Putative small ubiquitin-related modifier 7 (SUMO7) of Arabidopsis thaliana (Mouse-ear cress).